Consider the following 434-residue polypeptide: Enolase (434 aa).

Residue Q165 participates in (2R)-2-phosphoglycerate binding. Catalysis depends on E207, which acts as the Proton donor. Mg(2+) contacts are provided by D244, E291, and D318. Positions 343, 372, 373, and 394 each coordinate (2R)-2-phosphoglycerate. Residue K343 is the Proton acceptor of the active site.

It belongs to the enolase family. Mg(2+) serves as cofactor.

It is found in the cytoplasm. The protein resides in the secreted. The protein localises to the cell surface. It catalyses the reaction (2R)-2-phosphoglycerate = phosphoenolpyruvate + H2O. It functions in the pathway carbohydrate degradation; glycolysis; pyruvate from D-glyceraldehyde 3-phosphate: step 4/5. In terms of biological role, catalyzes the reversible conversion of 2-phosphoglycerate (2-PG) into phosphoenolpyruvate (PEP). It is essential for the degradation of carbohydrates via glycolysis. This Staphylococcus aureus (strain USA300 / TCH1516) protein is Enolase.